The following is a 60-amino-acid chain: Large ribosomal subunit protein uL30 (60 aa).

This sequence belongs to the universal ribosomal protein uL30 family. Part of the 50S ribosomal subunit.

The protein is Large ribosomal subunit protein uL30 of Verminephrobacter eiseniae (strain EF01-2).